The primary structure comprises 147 residues: Acidic phospholipase A2 S9-53F (147 aa).

The first 19 residues, 1-19, serve as a signal peptide directing secretion; that stretch reads MYPAHLLVLLAVCVSLLGA. Positions 20–27 are excised as a propeptide; sequence SDIPPQPL. Disulfide bonds link C38–C99, C54–C146, C56–C72, C71–C127, C78–C120, C88–C113, and C106–C118. Positions 55, 57, and 59 each coordinate Ca(2+). H75 is a catalytic residue. Residue D76 participates in Ca(2+) binding. D121 is an active-site residue.

This sequence belongs to the phospholipase A2 family. Group I subfamily. D49 sub-subfamily. The cofactor is Ca(2+). Expressed by the venom gland.

The protein localises to the secreted. The enzyme catalyses a 1,2-diacyl-sn-glycero-3-phosphocholine + H2O = a 1-acyl-sn-glycero-3-phosphocholine + a fatty acid + H(+). Functionally, snake venom phospholipase A2 (PLA2) that inhibits collagen-induced platelet aggregation. PLA2 catalyzes the calcium-dependent hydrolysis of the 2-acyl groups in 3-sn-phosphoglycerides. This chain is Acidic phospholipase A2 S9-53F, found in Austrelaps superbus (Lowland copperhead snake).